We begin with the raw amino-acid sequence, 148 residues long: Deoxyuridine 5'-triphosphate nucleotidohydrolase (148 aa).

Residues R67 to G69, N80, L84 to D86, and M94 contribute to the substrate site.

This sequence belongs to the dUTPase family. Requires Mg(2+) as cofactor.

It carries out the reaction dUTP + H2O = dUMP + diphosphate + H(+). It functions in the pathway pyrimidine metabolism; dUMP biosynthesis; dUMP from dCTP (dUTP route): step 2/2. Functionally, this enzyme is involved in nucleotide metabolism: it produces dUMP, the immediate precursor of thymidine nucleotides and it decreases the intracellular concentration of dUTP so that uracil cannot be incorporated into DNA. The chain is Deoxyuridine 5'-triphosphate nucleotidohydrolase from Paraburkholderia phymatum (strain DSM 17167 / CIP 108236 / LMG 21445 / STM815) (Burkholderia phymatum).